We begin with the raw amino-acid sequence, 464 residues long: JmjC domain-containing protein 1 (464 aa).

Residues 182–349 (LYAKDMHLFR…QMYTALKEQY (168 aa)) form the JmjC domain.

This chain is JmjC domain-containing protein 1 (jmj1), found in Schizosaccharomyces pombe (strain 972 / ATCC 24843) (Fission yeast).